Reading from the N-terminus, the 381-residue chain is Arogenate dehydratase/prephenate dehydratase 2, chloroplastic (381 aa).

The tract at residues 1 to 32 (MAMHTVRLSPATQLHGGISSNLSPPNRKPNNS) is disordered. The transit peptide at 1–66 (MAMHTVRLSP…DANGRDNSVR (66 aa)) directs the protein to the chloroplast. Polar residues predominate over residues 18–32 (ISSNLSPPNRKPNNS). Residues 100 to 275 (RVAYQGVRGA…NVTRFLMLAR (176 aa)) enclose the Prephenate dehydratase domain. One can recognise an ACT domain in the interval 289-375 (SIVFSLEEGP…TFLRVLGSYP (87 aa)).

As to expression, expressed in roots, leaves, stems, flowers and siliques. Most abundant in leaves and seeds.

The protein resides in the plastid. It localises to the chloroplast stroma. It catalyses the reaction L-arogenate + H(+) = L-phenylalanine + CO2 + H2O. It carries out the reaction prephenate + H(+) = 3-phenylpyruvate + CO2 + H2O. It participates in amino-acid biosynthesis; L-phenylalanine biosynthesis; L-phenylalanine from L-arogenate: step 1/1. Its pathway is amino-acid biosynthesis; L-phenylalanine biosynthesis; phenylpyruvate from prephenate: step 1/1. Converts the prephenate produced from the shikimate-chorismate pathway into phenylalanine. Dehydratase that uses arogenate and prephenate as substrates. Utilzes more efficiently arogenate than prephenate. Required for chloroplast division prior to ARC5, but in an ARC3- and ARC6-dependent manner, especially involved in the Z-ring formation. The chain is Arogenate dehydratase/prephenate dehydratase 2, chloroplastic from Arabidopsis thaliana (Mouse-ear cress).